The chain runs to 878 residues: MPEIDARLREDVHQLGELLGDTIREQYGPRFLDKIELIRKGAKAARRGSAEGAQQLTATLDGLEEDELLPVARAFNQFLNLANIAEQYHRIRRRRPNEPEPFENLVLEELLGRLKDAGHAPGQLARQLAGLEIELVLTAHPTEVARRTLIQKYDAITAQLAAKDHADLLPEERSRIQQRLQRLVAEAWHTDEIRKVRPTPVDEAKWGFAVIEHSLWQALPNVLRHVDEVLLRSTGERLPLTAAPLRFASWMGGDRDGNPNVTASVTREVLLLARWMAADLYLRDIDRLAAELSMQQASPQLLARVGDSAEPYRALLKQLRERLRVTRNWTHQALAGEVPAAEGVLEHNRDLVEPLQLCHESLHACGMGVIADGALLDCLRRAATFGLFLVRLDVRQDSARHAAALSEITEYLELGSYDEWDEKTRLEFLLEELNSRRPLLPAHYQPSADTAEVLATCRAIAAAPPASLGSYVISMAGQPSDVLAVQLLLKESGVDWPMRVVPLFETLDDLDNAGPCMERLLTLPGYRSRLSGVQEVMIGYSDSAKDAGTLTAAWAQYRAQEKLVEICRQHEVELLLFHGRGGTVGRGGGPAHAAILSQPPGSVAGRFRVTEQGEMIRFKFGLPDIAEQNLNLYLAAVLEATLMPPPAPEPAWRAQMDRLAKDALLAYRRVVRDDPQFVEYFRLATPEQELGRLPLGSRPAKRREGGVESLRAIPWIFAWTQTRLMLPAWLGWETALLNAIERGEGALLGQMREQWPFFTTRIDMLEMVLAKADADIARLYDERLVPLELRPLGRRLRDLLSQAVRVVLGLTGQSLLLAHASETRESISVRNSYLDPLHLLQAELLARSRRCRGDACGGLEQALLVTVAGVAAGLRNTG.

Catalysis depends on residues His140 and Lys545.

This sequence belongs to the PEPCase type 1 family. The cofactor is Mg(2+).

The catalysed reaction is oxaloacetate + phosphate = phosphoenolpyruvate + hydrogencarbonate. Its function is as follows. Forms oxaloacetate, a four-carbon dicarboxylic acid source for the tricarboxylic acid cycle. The protein is Phosphoenolpyruvate carboxylase of Pseudomonas aeruginosa (strain ATCC 15692 / DSM 22644 / CIP 104116 / JCM 14847 / LMG 12228 / 1C / PRS 101 / PAO1).